The following is a 341-amino-acid chain: Protein pelota homolog (341 aa).

Belongs to the eukaryotic release factor 1 family. Pelota subfamily. In terms of assembly, monomer. Requires a divalent metal cation as cofactor.

It is found in the cytoplasm. Functionally, may function in recognizing stalled ribosomes, interact with stem-loop structures in stalled mRNA molecules, and effect endonucleolytic cleavage of the mRNA. May play a role in the release non-functional ribosomes and degradation of damaged mRNAs. Has endoribonuclease activity. The sequence is that of Protein pelota homolog from Sulfurisphaera tokodaii (strain DSM 16993 / JCM 10545 / NBRC 100140 / 7) (Sulfolobus tokodaii).